Here is a 763-residue protein sequence, read N- to C-terminus: Phosphoglycerol transferase I (763 aa).

Transmembrane regions (helical) follow at residues 4–19 (LLSFALFLASVLIYAW), 26–48 (WWFAATLTVLGLFVVLNITLFAS), 76–98 (YILPGIGIVLGLTAVFGALGWIL), and 105–127 (PHHFGYSLLALLLALGSVDASPA).

Belongs to the OpgB family.

Its subcellular location is the cell inner membrane. The catalysed reaction is a phosphatidylglycerol + a membrane-derived-oligosaccharide D-glucose = a 1,2-diacyl-sn-glycerol + a membrane-derived-oligosaccharide 6-(glycerophospho)-D-glucose.. It functions in the pathway glycan metabolism; osmoregulated periplasmic glucan (OPG) biosynthesis. Functionally, transfers a phosphoglycerol residue from phosphatidylglycerol to the membrane-bound nascent glucan backbones. In Shigella flexneri, this protein is Phosphoglycerol transferase I.